We begin with the raw amino-acid sequence, 635 residues long: CCR4-NOT transcription complex subunit 10 (635 aa).

A Phosphothreonine modification is found at threonine 45. The stretch at 131-165 (LVARLEALEKAMAALVATLQLQLLLATNQLNRAEA) forms a coiled coil. Disordered regions lie at residues 396–416 (EERQ…QSAG) and 450–474 (SEDV…DNNF). A compositionally biased stretch (basic and acidic residues) spans 456–470 (PEPKDPTQESWRHPQ).

It belongs to the CNOT10 family. In terms of assembly, component of the CCR4-NOT complex. CNOT10 and CNOT11 form a subcomplex docked to the CNOT1 scaffold.

It is found in the cytoplasm. Its subcellular location is the nucleus. Functionally, component of the CCR4-NOT complex which is one of the major cellular mRNA deadenylases and is linked to various cellular processes including bulk mRNA degradation, miRNA-mediated repression, translational repression during translational initiation and general transcription regulation. Additional complex functions may be a consequence of its influence on mRNA expression. Is not required for association of CNOT7 to the CCR4-NOT complex. In Drosophila melanogaster (Fruit fly), this protein is CCR4-NOT transcription complex subunit 10 (Not10).